The following is a 285-amino-acid chain: Protease HtpX homolog (285 aa).

Helical transmembrane passes span Thr7 to Gly27 and Gly30 to Asp50. His131 serves as a coordination point for Zn(2+). Glu132 is an active-site residue. His135 is a binding site for Zn(2+). 2 helical membrane-spanning segments follow: residues Ile146–Gly166 and Ile177–Ile197. A Zn(2+)-binding site is contributed by Glu202.

This sequence belongs to the peptidase M48B family. The cofactor is Zn(2+).

It localises to the cell inner membrane. This chain is Protease HtpX homolog, found in Burkholderia mallei (strain NCTC 10247).